Reading from the N-terminus, the 502-residue chain is Glutamate--tRNA ligase (502 aa).

Residues 9 to 19 (PSPTGFPHVGT) carry the 'HIGH' region motif. The 'KMSKS' region signature appears at 250-254 (KLSKR). Residue lysine 253 participates in ATP binding.

This sequence belongs to the class-I aminoacyl-tRNA synthetase family. Glutamate--tRNA ligase type 1 subfamily. In terms of assembly, monomer.

It localises to the cytoplasm. It carries out the reaction tRNA(Glu) + L-glutamate + ATP = L-glutamyl-tRNA(Glu) + AMP + diphosphate. Catalyzes the attachment of glutamate to tRNA(Glu) in a two-step reaction: glutamate is first activated by ATP to form Glu-AMP and then transferred to the acceptor end of tRNA(Glu). This chain is Glutamate--tRNA ligase, found in Acinetobacter baylyi (strain ATCC 33305 / BD413 / ADP1).